Reading from the N-terminus, the 105-residue chain is Platelet factor 4 (105 aa).

A signal peptide spans M1 to A29. The O-linked (GalNAc...) threonine glycan is linked to T31. Cystine bridges form between C44-C71 and C46-C87. S61 is modified (phosphoserine). A heparin-binding site is contributed by K96 to I102.

It belongs to the intercrine alpha (chemokine CxC) family. In terms of assembly, homotetramer. Interacts with TNFAIP6 (via Link domain). Interacts with CCR1. Interacts with CXCR3. Interacts with THBD; this interaction enhances generation of activated protein C.

The protein localises to the secreted. Chemokine released during platelet aggregation that plays a role in different biological processes including hematopoiesis, cell proliferation, differentiation, and activation. Acts via different functional receptors including CCR1, CXCR3A or CXCR3B. Upon interaction with CXCR3A receptor, induces activated T-lymphocytes migration mediated via downstream Ras/extracellular signal-regulated kinase (ERK) signaling. Neutralizes the anticoagulant effect of heparin by binding more strongly to heparin than to the chondroitin-4-sulfate chains of the carrier molecule. Plays a role in the inhibition of hematopoiesis and in the maintenance of hematopoietic stem cell (HSC) quiescence. Chemotactic for neutrophils and monocytes via CCR1. Inhibits endothelial cell proliferation. In cooperation with toll-like receptor 8/TLR8, induces chromatin remodeling and activates inflammatory gene expression via the TBK1-IRF5 axis. In addition, induces myofibroblast differentiation and collagen synthesis in different precursor cells, including endothelial cells, by stimulating endothelial-to-mesenchymal transition. Interacts with thrombomodulin/THBD to enhance the activation of protein C and thus potentiates its anticoagulant activity. The chain is Platelet factor 4 (Pf4) from Mus musculus (Mouse).